Reading from the N-terminus, the 147-residue chain is Protein SprT-like (147 aa).

The SprT-like domain occupies 9-142 (AKVKEISLTY…CGKCRGKLIL (134 aa)). H65 lines the Zn(2+) pocket. Residue E66 is part of the active site. A Zn(2+)-binding site is contributed by H69.

This sequence belongs to the SprT family. Zn(2+) serves as cofactor.

It localises to the cytoplasm. The protein is Protein SprT-like (yciD) of Lactococcus lactis subsp. lactis (strain IL1403) (Streptococcus lactis).